The following is a 309-amino-acid chain: 1,2-phenylacetyl-CoA epoxidase, subunit A (309 aa).

Substrate contacts are provided by residues Arg33, Gln37, 103–106, Asn132, Met193, 202–204, Lys214, and Asn218; these read KYSS and SPN.

In terms of assembly, forms a stable heterotetramer (dimer of heterodimers) with PaaC. Fe cation serves as cofactor.

It catalyses the reaction phenylacetyl-CoA + NADPH + O2 + H(+) = 2-(1,2-epoxy-1,2-dihydrophenyl)acetyl-CoA + NADP(+) + H2O. It participates in aromatic compound metabolism; phenylacetate degradation. Functionally, component of 1,2-phenylacetyl-CoA epoxidase multicomponent enzyme system which catalyzes the reduction of phenylacetyl-CoA (PA-CoA) to form 1,2-epoxyphenylacetyl-CoA. The subunit A is the catalytic subunit involved in the incorporation of one atom of molecular oxygen into phenylacetyl-CoA. In Escherichia coli (strain K12), this protein is 1,2-phenylacetyl-CoA epoxidase, subunit A (paaA).